A 171-amino-acid chain; its full sequence is MLRQTTKRAFLGLASQNPTPFPVVSRLYHPNVIDHYDNPRNVGSFDKNDPNVGTGLVGAPQCGDVMKLQVKFDGSGQIIDAKFKTFGCGSAIAASSVATEWVKGKSVEEVLTIKNSQIAKHLSLPPVKLHCSMLAEDAIKAAIKNYKEKQDKANGETVETIDSTYLHGIGS.

The N-terminal 49 residues, 1 to 49 (MLRQTTKRAFLGLASQNPTPFPVVSRLYHPNVIDHYDNPRNVGSFDKND), are a transit peptide targeting the mitochondrion.

Belongs to the NifU family. In terms of assembly, component of the core Fe-S cluster (ISC) assembly machinery. [2Fe-2S] cluster is required as a cofactor. Mostly expressed in flowers and pollen, and, to a lower extent, in leaves and roots.

Its subcellular location is the mitochondrion matrix. It functions in the pathway cofactor biosynthesis; iron-sulfur cluster biosynthesis. Its function is as follows. Scaffold protein for the de novo synthesis of iron-sulfur (Fe-S) clusters within mitochondria, which is required for maturation of both mitochondrial and cytoplasmic [2Fe-2S] and [4Fe-4S] proteins. First, a [2Fe-2S] cluster is transiently assembled on the scaffold protein ISCU (ISU1, ISU2 or ISU3). In a second step, the cluster is released from ISCU, transferred to a glutaredoxin, followed by the formation of mitochondrial [2Fe-2S] proteins, the synthesis of [4Fe-4S] clusters and their target-specific insertion into the recipient apoproteins. Cluster assembly on ISCU depends on the function of the cysteine desulfurase complex NFS1-ISD11, which serves as the sulfur donor for cluster synthesis, the iron-binding protein frataxin as the putative iron donor, and the electron transfer chain comprised of ferredoxin reductase and ferredoxin, which receive their electrons from NADH. This Arabidopsis thaliana (Mouse-ear cress) protein is Iron-sulfur cluster assembly protein 3 (ISU3).